The sequence spans 770 residues: Glutamate carboxypeptidase 2 homolog (770 aa).

Topologically, residues 1–25 (MPYVGVGAQTVSTSLTGAPMVKAYI) are cytoplasmic. A helical; Signal-anchor for type II membrane protein transmembrane segment spans residues 26-42 (AIAASLIFVFCIAALGV). The Extracellular portion of the chain corresponds to 43–770 (HHSERKFNKF…CVVNTLRDVI (728 aa)). N-linked (GlcNAc...) asparagine glycans are attached at residues Asn175 and Asn337. Positions 282-597 (SKKELFKGRT…QYWAELAKTF (316 aa)) are catalytic. Residues His387 and Asp397 each contribute to the Zn(2+) site. N-linked (GlcNAc...) asparagine glycosylation occurs at Asn417. The Nucleophile role is filled by Glu435. Residues Glu436 and Asp464 each coordinate Zn(2+). N-linked (GlcNAc...) asparagine glycans are attached at residues Asn469, Asn546, and Asn551. Residue His562 participates in Zn(2+) binding. Asn579, Asn606, and Asn630 each carry an N-linked (GlcNAc...) asparagine glycan.

This sequence belongs to the peptidase M28 family. M28B subfamily. Zn(2+) serves as cofactor.

Its subcellular location is the membrane. It carries out the reaction Release of an unsubstituted, C-terminal glutamyl residue, typically from Ac-Asp-Glu or folylpoly-gamma-glutamates.. The chain is Glutamate carboxypeptidase 2 homolog from Caenorhabditis elegans.